The following is a 227-amino-acid chain: Isopentenyl-diphosphate Delta-isomerase 1 (227 aa).

Substrate is bound at residue Lys-36. The Mg(2+) site is built by His-40 and His-51. The Nudix hydrolase domain occupies 49 to 199; that stretch reads LLHRAFSVFL…EIKITPWFQI (151 aa). Residues Arg-70 and Lys-74 each contribute to the substrate site. The Proton acceptor role is filled by Cys-86. Ser-87 provides a ligand contact to substrate. Residues Glu-146 and Glu-148 each contribute to the Mg(2+) site. The active site involves Glu-148. Lys-176 is modified (N6-acetyllysine).

The protein belongs to the IPP isomerase type 1 family. In terms of assembly, monomer. The cofactor is Mg(2+).

It localises to the peroxisome. The enzyme catalyses isopentenyl diphosphate = dimethylallyl diphosphate. The protein operates within isoprenoid biosynthesis; dimethylallyl diphosphate biosynthesis; dimethylallyl diphosphate from isopentenyl diphosphate: step 1/1. In terms of biological role, catalyzes the 1,3-allylic rearrangement of the homoallylic substrate isopentenyl (IPP) to its highly electrophilic allylic isomer, dimethylallyl diphosphate (DMAPP). The sequence is that of Isopentenyl-diphosphate Delta-isomerase 1 (IDI1) from Bos taurus (Bovine).